We begin with the raw amino-acid sequence, 43 residues long: Large ribosomal subunit protein uL5 (43 aa).

The protein belongs to the universal ribosomal protein uL5 family. Part of the 50S ribosomal subunit; part of the 5S rRNA/L5/L18/L25 subcomplex. Contacts the 5S rRNA and the P site tRNA. Forms a bridge to the 30S subunit in the 70S ribosome.

Its function is as follows. This is one of the proteins that bind and probably mediate the attachment of the 5S RNA into the large ribosomal subunit, where it forms part of the central protuberance. In the 70S ribosome it contacts protein S13 of the 30S subunit (bridge B1b), connecting the 2 subunits; this bridge is implicated in subunit movement. Contacts the P site tRNA; the 5S rRNA and some of its associated proteins might help stabilize positioning of ribosome-bound tRNAs. The chain is Large ribosomal subunit protein uL5 (rplE) from Serratia marcescens.